Here is a 320-residue protein sequence, read N- to C-terminus: Lipoyl synthase (320 aa).

The segment at Met-1–Lys-29 is disordered. Residues Ala-19 to Lys-29 show a composition bias toward basic and acidic residues. Positions 59, 64, 70, 85, 89, 92, and 298 each coordinate [4Fe-4S] cluster. Residues Trp-71–Leu-287 enclose the Radical SAM core domain.

The protein belongs to the radical SAM superfamily. Lipoyl synthase family. It depends on [4Fe-4S] cluster as a cofactor.

The protein resides in the cytoplasm. The enzyme catalyses [[Fe-S] cluster scaffold protein carrying a second [4Fe-4S](2+) cluster] + N(6)-octanoyl-L-lysyl-[protein] + 2 oxidized [2Fe-2S]-[ferredoxin] + 2 S-adenosyl-L-methionine + 4 H(+) = [[Fe-S] cluster scaffold protein] + N(6)-[(R)-dihydrolipoyl]-L-lysyl-[protein] + 4 Fe(3+) + 2 hydrogen sulfide + 2 5'-deoxyadenosine + 2 L-methionine + 2 reduced [2Fe-2S]-[ferredoxin]. It participates in protein modification; protein lipoylation via endogenous pathway; protein N(6)-(lipoyl)lysine from octanoyl-[acyl-carrier-protein]: step 2/2. In terms of biological role, catalyzes the radical-mediated insertion of two sulfur atoms into the C-6 and C-8 positions of the octanoyl moiety bound to the lipoyl domains of lipoate-dependent enzymes, thereby converting the octanoylated domains into lipoylated derivatives. The sequence is that of Lipoyl synthase from Bartonella tribocorum (strain CIP 105476 / IBS 506).